The primary structure comprises 479 residues: Ammonium transporter Rh type C (479 aa).

At 1–9 (MAWNTNLRW) the chain is on the cytoplasmic side. A helical membrane pass occupies residues 10–30 (RLPLTCLLLQVAMVILFGVFV). Topologically, residues 31-60 (RYDFDADAHWWTERKHKNLSEVENEFYYRY) are extracellular. The N-linked (GlcNAc...) asparagine glycan is linked to N48. Residues 61-81 (PSFQDVHVMVFVGFGFLMTFL) traverse the membrane as a helical segment. The Cytoplasmic portion of the chain corresponds to 82-85 (QRYG). The chain crosses the membrane as a helical span at residues 86–106 (FSAVGFNFLLAAFGIQWALLM). Residues 107–123 (QGWFHFLEGRYIVVGVE) are Extracellular-facing. A helical transmembrane segment spans residues 124-144 (NLINADFCVASVCVAFGAVLG). Residues 145-148 (KVSP) are Cytoplasmic-facing. The chain crosses the membrane as a helical span at residues 149–169 (IQLLIMTFFQVTLFAVNEFIL). At 170 to 177 (LNLLKVKD) the chain is on the extracellular side. Residues 178 to 200 (AGGSMTIHTFYAYFELTVTRILY) traverse the membrane as a helical segment. Over 201 to 218 (RRNLEQSKERQSSAYQSD) the chain is Cytoplasmic. A helical membrane pass occupies residues 219-239 (LFAMIGTLFLWMYWPSFNSAI). The Extracellular portion of the chain corresponds to 240 to 250 (SYHGDSQHRAA). Residues 251–271 (INTYCSLAACVLTSVAVSSAL) traverse the membrane as a helical segment. The Cytoplasmic portion of the chain corresponds to 272–281 (HKKGKLDMVH). The helical transmembrane segment at 282–302 (IQNATLAGGVAVGTTAEMMLM) threads the bilayer. Residue P303 is a topological domain, extracellular. The helical transmembrane segment at 304–324 (YGALIIGFICGIISTLGFVYL) threads the bilayer. The Cytoplasmic segment spans residues 325–345 (TPFLESRLHIQDTCGINNLHG). Residues 346 to 366 (IPGIIGGIVGAVTAASASLEV) form a helical membrane-spanning segment. The Extracellular segment spans residues 367-394 (YGKEGLVHSFDFQDFKRDWTARTQGKFQ). A helical transmembrane segment spans residues 395–415 (IYGLLVTLAMALMGGIIVGLI). Residues 416-479 (LRLPFWGQPS…PMASSVPLVP (64 aa)) lie on the Cytoplasmic side of the membrane.

It belongs to the ammonium transporter (TC 2.A.49) family. Rh subfamily. In terms of assembly, homotrimer. N-glycosylated.

The protein resides in the apical cell membrane. It carries out the reaction NH4(+)(in) = NH4(+)(out). It catalyses the reaction methylamine(out) = methylamine(in). The enzyme catalyses CO2(out) = CO2(in). Its function is as follows. Ammonium transporter involved in the maintenance of acid-base homeostasis. Transports ammonium and its related derivative methylammonium across the plasma membrane of epithelial cells likely contributing to renal transepithelial ammonia transport and ammonia metabolism. Postulated to primarily mediate an electroneutral bidirectional transport of NH3 ammonia species according to a mechanism that implies interaction of an NH4(+) ion with acidic residues of the pore entry followed by dissociation of NH4(+) into NH3 and H(+). As a result NH3 transits through the central pore and is protonated on the extracellular side reforming NH4(+). May act as a CO2 channel providing for renal acid secretion. The polypeptide is Ammonium transporter Rh type C (RHCG) (Macaca mulatta (Rhesus macaque)).